The chain runs to 497 residues: Transcriptional regulator ATRX (497 aa).

Residues K1 and K5 each participate in a glycyl lysine isopeptide (Lys-Gly) (interchain with G-Cter in SUMO2) cross-link. The 138-residue stretch at 21–158 (KKRGEGLHGI…LEQLLQQNKK (138 aa)) folds into the ADD domain. Residues 32 to 68 (SCTACGQQVNHFQKDSIYRHPTLKVLICKNCYKYYMS) form a GATA-type; atypical zinc finger. The PHD-type; atypical zinc finger occupies 79–134 (DEQCRWCAEGGNLICCDFCHNAFCKKCILRNLGRKELSAIMDENSQWYCYICRPEP). A Glycyl lysine isopeptide (Lys-Gly) (interchain with G-Cter in SUMO2) cross-link involves residue K161. S178 is modified (phosphoserine). A Glycyl lysine isopeptide (Lys-Gly) (interchain with G-Cter in SUMO2) cross-link involves residue K300. Residues 346–368 (PVHKTTSAEDKKSSRKDPHFEPA) form a disordered region. The segment covering 351 to 365 (TSAEDKKSSRKDPHF) has biased composition (basic and acidic residues).

This sequence belongs to the SNF2/RAD54 helicase family. In terms of assembly, interacts with DAXX to form the chromatin remodeling complex ATRX:DAXX. Probably binds EZH2. Binds annexin V in a calcium and phosphatidylcholine/phosphatidylserine-dependent manner. Interacts directly with CBX5 via the PxVxL motif. Interacts with RAD50, MRE11 and NBN; indicative for an association with the MRN complex. Interacts with histone MACROH2A1. Interacts with histone H3 peptides methylated at 'Lys-10' with preferences H3K9me3 &gt; H3K9me2 &gt; H3K9me1. Interacts with histone H3 peptides unmethylated at 'Lys-5' (H3K4me0). Interacts with MECP2, SMC1 and SMC3. Interacts with SETDB1, TRIM28 and ZNF274. In terms of tissue distribution, expressed in all tissues except developing testis.

It is found in the nucleus. It localises to the chromosome. Its subcellular location is the telomere. The protein localises to the PML body. It carries out the reaction ATP + H2O = ADP + phosphate + H(+). In terms of biological role, involved in transcriptional regulation and chromatin remodeling. Facilitates DNA replication in multiple cellular environments and is required for efficient replication of a subset of genomic loci. Binds to DNA tandem repeat sequences in both telomeres and euchromatin and in vitro binds DNA quadruplex structures. May help stabilizing G-rich regions into regular chromatin structures by remodeling G4 DNA and incorporating H3.3-containing nucleosomes. Catalytic component of the chromatin remodeling complex ATRX:DAXX which has ATP-dependent DNA translocase activity and catalyzes the replication-independent deposition of histone H3.3 in pericentric DNA repeats outside S-phase and telomeres, and the in vitro remodeling of H3.3-containing nucleosomes. Its heterochromatin targeting is proposed to involve a combinatorial readout of histone H3 modifications (specifically methylation states of H3K9 and H3K4) and association with CBX5. May be involved in transcriptional regulation of telomeric repeat-containing RNA (TERRA). Acts as a negative regulator of chromatin incorporation of transcriptionally repressive histone MACROH2A1, particularily at telomeres. Binds to zinc-finger coding genes with atypical chromatin signatures and regulates its H3K9me3 levels. Forms a complex with ZNF274, TRIM28 and SETDB1 to facilitate the deposition and maintenance of H3K9me3 at the 3' exons of zinc-finger genes. The sequence is that of Transcriptional regulator ATRX (ATRX) from Notamacropus eugenii (Tammar wallaby).